The following is a 60-amino-acid chain: HLLQFGDLINKIARRNGILYYSFYGCYCGLGGRGRPQDATDRCCFVHDCCYGKVTGCDPK.

Ca(2+)-binding residues include Tyr-27, Gly-29, and Gly-31. A disulfide bond links Cys-28 and Cys-44. Residue His-47 is part of the active site. Asp-48 contacts Ca(2+).

The cofactor is Ca(2+). Expressed by the venom gland.

It is found in the secreted. The enzyme catalyses a 1,2-diacyl-sn-glycero-3-phosphocholine + H2O = a 1-acyl-sn-glycero-3-phosphocholine + a fatty acid + H(+). Functionally, snake venom phospholipase A2 (PLA2) that displays mild but significant inhibition of mouse platelet aggregation induced by ADP and collagen. In vivo, induces edema in the foot pads and gastrocnemius muscles of mice but shows no myonecrotic or myotoxic activity. PA2 catalyzes the calcium-dependent hydrolysis of the 2-acyl groups in 3-sn-phosphoglycerides. The chain is Phospholipase A2 from Lachesis muta rhombeata (Bushmaster).